An 819-amino-acid chain; its full sequence is Putative U-box domain-containing protein 53 (819 aa).

Disordered stretches follow at residues 208-309 and 398-433; these read TSDT…NPQF and KETE…KEKL. Residues 223-237 show a composition bias toward low complexity; sequence ERTSSSCSSGSGANS. Positions 238–260 are enriched in polar residues; it reads DVMSNALKSNPHTLSNKRMQNLP. Residues 278–296 are compositionally biased toward basic and acidic residues; sequence DETKKRSSDAAEEASKRSS. Over residues 297-307 the composition is skewed to polar residues; sequence PETSRSVSWNP. The stretch at 395–437 forms a coiled coil; that stretch reads IAKKETEKFEQKRREEREAAQRREAEMKATHEAKEKEKLEESS. The 269-residue stretch at 460 to 728 folds into the Protein kinase domain; that stretch reads FSEDLKIGMG…DLEDQILPVL (269 aa). ATP contacts are provided by residues 466–474 and K487; that span reads IGMGAYGDV. The active-site Proton acceptor is the D582. A U-box domain is found at 748 to 819; it reads QPPSHFFCPL…AIVEWRNRNQ (72 aa).

It belongs to the protein kinase superfamily. Ser/Thr protein kinase family.

The catalysed reaction is L-seryl-[protein] + ATP = O-phospho-L-seryl-[protein] + ADP + H(+). It carries out the reaction L-threonyl-[protein] + ATP = O-phospho-L-threonyl-[protein] + ADP + H(+). It catalyses the reaction S-ubiquitinyl-[E2 ubiquitin-conjugating enzyme]-L-cysteine + [acceptor protein]-L-lysine = [E2 ubiquitin-conjugating enzyme]-L-cysteine + N(6)-ubiquitinyl-[acceptor protein]-L-lysine.. It functions in the pathway protein modification; protein ubiquitination. Its function is as follows. Functions as an E3 ubiquitin ligase. In Arabidopsis thaliana (Mouse-ear cress), this protein is Putative U-box domain-containing protein 53 (PUB53).